A 270-amino-acid chain; its full sequence is FKBP-type peptidyl-prolyl cis-trans isomerase FkpA (270 aa).

Positions 1 to 25 (MKSLFKVTLLATTMAVALHAPITFA) are cleaved as a signal peptide. Residues 164–249 (SDTVVVNYKG…VFDVELLDVK (86 aa)) enclose the PPIase FKBP-type domain.

This sequence belongs to the FKBP-type PPIase family.

It is found in the periplasm. It carries out the reaction [protein]-peptidylproline (omega=180) = [protein]-peptidylproline (omega=0). Its function is as follows. PPIases accelerate the folding of proteins. It catalyzes the cis-trans isomerization of proline imidic peptide bonds in oligopeptides. The protein is FKBP-type peptidyl-prolyl cis-trans isomerase FkpA (fkpA) of Escherichia coli O157:H7.